Reading from the N-terminus, the 158-residue chain is pH 6 antigen (158 aa).

The N-terminal stretch at 1 to 26 is a signal peptide; it reads MKMKCFAKNALAVTTLMIAACGMANA.

In terms of assembly, forms a homomer composed of subunits assembled in a large structure.

The protein localises to the fimbrium. In terms of biological role, fibrillar structure, part of fimbriae, necessary for full virulence. The protein is pH 6 antigen (psaA) of Yersinia pestis.